Reading from the N-terminus, the 197-residue chain is Cold-regulated 413 plasma membrane protein 1 (197 aa).

Residues 1 to 40 (MPMKSLRNDHGTLKAMIGSDFNELTIAAKNLATHAFTLTG) lie on the Extracellular side of the membrane. The chain crosses the membrane as a helical span at residues 41 to 61 (LGFGTSVLEWVASIAAIYLLV). Residues 62-71 (LDRTNWKTNM) are Cytoplasmic-facing. The chain crosses the membrane as a helical span at residues 72–92 (LTSLLIPYIFFSLPSLIFGIF). At 93-94 (RG) the chain is on the extracellular side. A helical membrane pass occupies residues 95-115 (EIGKWIAFVAVVVQLFFPKHA). Over 116–117 (RE) the chain is Cytoplasmic. A helical transmembrane segment spans residues 118 to 138 (YLELPVALVLLAVVAPNLIAG). The Extracellular segment spans residues 139–141 (TFR). The helical transmembrane segment at 142–162 (DSWIGLAICLGIGCYLLQEHI) threads the bilayer. The Cytoplasmic portion of the chain corresponds to 163-176 (RASGGFRNAFTKAN). Residues 177 to 197 (GISNTVGIICLVVFPVWALIF) traverse the membrane as a helical segment.

This sequence belongs to the Cold-regulated 413 protein family.

The protein resides in the membrane. The chain is Cold-regulated 413 plasma membrane protein 1 (COR413PM1) from Arabidopsis thaliana (Mouse-ear cress).